Here is a 291-residue protein sequence, read N- to C-terminus: Acetyl-coenzyme A carboxylase carboxyl transferase subunit beta (291 aa).

The CoA carboxyltransferase N-terminal domain maps to 34–291; the sequence is MWTKCSNCNN…LILHGVNKYE (258 aa). Positions 38, 41, 57, and 60 each coordinate Zn(2+). The C4-type zinc-finger motif lies at 38–60; sequence CSNCNNMIYYEDLENNKYVCTKC.

This sequence belongs to the AccD/PCCB family. In terms of assembly, acetyl-CoA carboxylase is a heterohexamer composed of biotin carboxyl carrier protein (AccB), biotin carboxylase (AccC) and two subunits each of ACCase subunit alpha (AccA) and ACCase subunit beta (AccD). Zn(2+) serves as cofactor.

The protein localises to the cytoplasm. The enzyme catalyses N(6)-carboxybiotinyl-L-lysyl-[protein] + acetyl-CoA = N(6)-biotinyl-L-lysyl-[protein] + malonyl-CoA. Its pathway is lipid metabolism; malonyl-CoA biosynthesis; malonyl-CoA from acetyl-CoA: step 1/1. Functionally, component of the acetyl coenzyme A carboxylase (ACC) complex. Biotin carboxylase (BC) catalyzes the carboxylation of biotin on its carrier protein (BCCP) and then the CO(2) group is transferred by the transcarboxylase to acetyl-CoA to form malonyl-CoA. In Clostridium botulinum (strain Eklund 17B / Type B), this protein is Acetyl-coenzyme A carboxylase carboxyl transferase subunit beta.